The sequence spans 363 residues: Glutamate--cysteine ligase (363 aa).

It belongs to the glutamate--cysteine ligase type 2 family. YbdK subfamily.

The enzyme catalyses L-cysteine + L-glutamate + ATP = gamma-L-glutamyl-L-cysteine + ADP + phosphate + H(+). Catalyzes the synthesis of gamma-glutamylcysteine (gamma-GC), the main low-molecular-weight thiol compound instead of glutathione in halophilic archaea. This chain is Glutamate--cysteine ligase, found in Haloquadratum walsbyi (strain DSM 16790 / HBSQ001).